The chain runs to 188 residues: Elongation factor P (188 aa).

It belongs to the elongation factor P family.

It is found in the cytoplasm. It functions in the pathway protein biosynthesis; polypeptide chain elongation. Its function is as follows. Involved in peptide bond synthesis. Stimulates efficient translation and peptide-bond synthesis on native or reconstituted 70S ribosomes in vitro. Probably functions indirectly by altering the affinity of the ribosome for aminoacyl-tRNA, thus increasing their reactivity as acceptors for peptidyl transferase. The chain is Elongation factor P from Phocaeicola vulgatus (strain ATCC 8482 / DSM 1447 / JCM 5826 / CCUG 4940 / NBRC 14291 / NCTC 11154) (Bacteroides vulgatus).